The chain runs to 877 residues: Protein P (877 aa).

The segment at 1–183 is terminal protein domain (TP); that stretch reads MHPFSQLFRN…GKPYSWGHRQ (183 aa). The interval 184–382 is spacer; it reads LEQHNGQQHE…YCLHHIVSSL (199 aa). Residues 185–198 are compositionally biased toward basic and acidic residues; sequence EQHNGQQHESHLQS. The disordered stretch occupies residues 185 to 347; it reads EQHNGQQHES…PSSSGLCGGT (163 aa). Polar residues predominate over residues 233 to 242; it reads FGESQKSART. A compositionally biased stretch (low complexity) spans 267–281; the sequence is QQGSSQVSSPRSKSS. Polar residues-rich tracts occupy residues 282–302 and 338–347; these read NFRN…PTWY and PSSSGLCGGT. Residues 383–723 are polymerase/reverse transcriptase domain (RT); that stretch reads EDWGPCTISG…YAELWPVARQ (341 aa). The Reverse transcriptase domain occupies 393–634; it reads DVTIRSPRTP…HHLHFMGYVI (242 aa). Positions 465, 585, and 586 each coordinate Mg(2+).

The protein belongs to the hepadnaviridae P protein family.

The catalysed reaction is DNA(n) + a 2'-deoxyribonucleoside 5'-triphosphate = DNA(n+1) + diphosphate. It carries out the reaction Endonucleolytic cleavage to 5'-phosphomonoester.. With respect to regulation, activated by host HSP70 and HSP40 in vitro to be able to bind the epsilon loop of the pgRNA. Because deletion of the RNase H region renders the protein partly chaperone-independent, the chaperones may be needed indirectly to relieve occlusion of the RNA-binding site by this domain. Inhibited by several reverse-transcriptase inhibitors: Lamivudine, Adefovir and Entecavir. Multifunctional enzyme that converts the viral RNA genome into dsDNA in viral cytoplasmic capsids. This enzyme displays a DNA polymerase activity that can copy either DNA or RNA templates, and a ribonuclease H (RNase H) activity that cleaves the RNA strand of RNA-DNA heteroduplexes in a partially processive 3'- to 5'-endonucleasic mode. Neo-synthesized pregenomic RNA (pgRNA) are encapsidated together with the P protein, and reverse-transcribed inside the nucleocapsid. Initiation of reverse-transcription occurs first by binding the epsilon loop on the pgRNA genome, and is initiated by protein priming, thereby the 5'-end of (-)DNA is covalently linked to P protein. Partial (+)DNA is synthesized from the (-)DNA template and generates the relaxed circular DNA (RC-DNA) genome. After budding and infection, the RC-DNA migrates in the nucleus, and is converted into a plasmid-like covalently closed circular DNA (cccDNA). The activity of P protein does not seem to be necessary for cccDNA generation, and is presumably released from (+)DNA by host nuclear DNA repair machinery. The chain is Protein P from Arctic squirrel hepatitis virus (ASHV).